Consider the following 499-residue polypeptide: tRNA (guanine(37)-N(1))-methyltransferase (499 aa).

Residues 1–44 constitute a mitochondrion transit peptide; it reads MKIALPVFQKFNRLISSCKMSGVFPYNPPVNRQMRELDRSFFIT. S-adenosyl-L-methionine contacts are provided by residues H268, 307 to 308, 335 to 336, and N399; these read DL and DG.

It belongs to the class I-like SAM-binding methyltransferase superfamily. TRM5/TYW2 family. Monomer.

Its subcellular location is the mitochondrion matrix. It is found in the nucleus. The protein resides in the cytoplasm. It catalyses the reaction guanosine(37) in tRNA + S-adenosyl-L-methionine = N(1)-methylguanosine(37) in tRNA + S-adenosyl-L-homocysteine + H(+). Functionally, specifically methylates the N1 position of guanosine-37 in various cytoplasmic and mitochondrial tRNAs. Methylation is not dependent on the nature of the nucleoside 5' of the target nucleoside. This is the first step in the biosynthesis of wybutosine (yW), a modified base adjacent to the anticodon of tRNAs and required for accurate decoding. Postspliced cytoplasmic tRNAs are imported into the nucleus, where this first step seems to take place, after which they are reexported to the cytoplasm, where the yW sythesis is completed by cytoplasmic enzymes. This Saccharomyces cerevisiae (strain ATCC 204508 / S288c) (Baker's yeast) protein is tRNA (guanine(37)-N(1))-methyltransferase.